Reading from the N-terminus, the 524-residue chain is RNA-binding protein 39 (524 aa).

The interval 1-146 (MADDIDIEAM…PVREPIDNLT (146 aa)) is disordered. An N-acetylalanine modification is found at alanine 2. Residues 14-32 (PYKKDENKLSSANGHEERS) are compositionally biased toward basic and acidic residues. 2 stretches are compositionally biased toward basic residues: residues 33 to 56 (KKRKKSKSRSRSHERKRSKSKERK) and 64 to 95 (KKSKSRERKRSRSKERRRSRSRSRDRRFRGRY). Residue tyrosine 95 is modified to Phosphotyrosine. Serine 97 and serine 100 each carry phosphoserine. Lysine 111 participates in a covalent cross-link: Glycyl lysine isopeptide (Lys-Gly) (interchain with G-Cter in SUMO2). Phosphoserine is present on serine 117. Lysine 119 is covalently cross-linked (Glycyl lysine isopeptide (Lys-Gly) (interchain with G-Cter in SUMO2)). Basic residues predominate over residues 119–130 (KLSRRRSRSKSP). Phosphoserine is present on residues serine 121 and serine 136. The segment covering 131–146 (FRKDKSPVREPIDNLT) has biased composition (basic and acidic residues). The residue at position 146 (threonine 146) is a Phosphothreonine. Residues 153 to 230 (RTVFCMQLAA…VPIIVQASQA (78 aa)) form the RRM 1 domain. Lysine 244 is covalently cross-linked (Glycyl lysine isopeptide (Lys-Gly) (interchain with G-Cter in SUMO2)). The region spanning 250–328 (MRLYVGSLHF…RPMKVGHVTE (79 aa)) is the RRM 2 domain. The interval 291–355 (KGYGFITFSD…RTGIDLGTTG (65 aa)) is activating domain. Residues 291 to 400 (KGYGFITFSD…ADLQTRLSQQ (110 aa)) are interaction with JUN. 3 positions are modified to phosphoserine: serine 334, serine 337, and serine 341. The segment at 355-400 (GRLQLMARLAEGTGLQIPPAAQQALQMSGSLAFGAVADLQTRLSQQ) is interaction with ESR1 and ESR2. Residues 400-524 (QTEASALAAA…ATQLLVPSRR (125 aa)) are interaction with NCOA6. Residues 439–502 (EIKDDVIEEC…KMITAAYVPL (64 aa)) enclose the RRM 3 domain.

Belongs to the splicing factor SR family. Interacts with NCOA6 and JUN. Interacts with ESR1 and ESR2, in the presence of estradiol (E2). Interacts with RSRC1 (via Arg/Ser-rich domain). Interacts with SF3B1. Interacts with ZNF106 (via N-terminus).

It is found in the nucleus speckle. Its function is as follows. RNA-binding protein that acts as a pre-mRNA splicing factor. Acts by promoting exon inclusion via regulation of exon cassette splicing. Also acts as a transcriptional coactivator for steroid nuclear receptors ESR1/ER-alpha and ESR2/ER-beta, and JUN/AP-1, independently of the pre-mRNA splicing factor activity. In Pongo abelii (Sumatran orangutan), this protein is RNA-binding protein 39 (RBM39).